Consider the following 351-residue polypeptide: 5-deoxyribose 1-phosphate isomerase (351 aa).

Substrate is bound by residues 48–50, Arg-91, and Gln-198; that span reads RGA. Asp-239 serves as the catalytic Proton donor. 249–250 contributes to the substrate binding site; the sequence is NK.

Belongs to the EIF-2B alpha/beta/delta subunits family. DrdI subfamily.

The catalysed reaction is 5-deoxy-alpha-D-ribose 1-phosphate = 5-deoxy-D-ribulose 1-phosphate. Its pathway is carbohydrate degradation. Functionally, catalyzes the isomerization of 5-deoxy-alpha-D-ribose 1-phosphate to 5-deoxy-D-ribulose 1-phosphate, as part of a 5-deoxyribose salvage pathway that recycles this toxic radical SAM enzyme by-product to mainstream metabolites. The protein is 5-deoxyribose 1-phosphate isomerase of Moorella thermoacetica (strain ATCC 39073 / JCM 9320).